We begin with the raw amino-acid sequence, 175 residues long: Disulfide bond formation protein B (175 aa).

The Cytoplasmic portion of the chain corresponds to 1-13; that stretch reads MTAFTRFAHSRAS. Residues 14–30 form a helical membrane-spanning segment; that stretch reads WFILTGSAIALEAAALY. The Periplasmic portion of the chain corresponds to 31-48; sequence FQYVMKLDPCVMCIYQRL. A disulfide bridge links Cys40 with Cys43. Residues 49-64 form a helical membrane-spanning segment; sequence AVFGILASGLIGMTAP. The Cytoplasmic segment spans residues 65-71; that stretch reads KFLIVRI. A helical membrane pass occupies residues 72–89; the sequence is LGAIGWAVSATWGLKLAL. At 90–144 the chain is on the periplasmic side; that stretch reads ALVDMQNNPSPFSTCSFLPEFPAWMPLHEWFPSVMLPTGMCTDVPWQFMGVTMAE. A disulfide bond links Cys104 and Cys130. Residues 145–163 traverse the membrane as a helical segment; the sequence is WMVVAFSGYLVALLLFIVP. At 164–175 the chain is on the cytoplasmic side; the sequence is ILSGSNKPSLYK.

This sequence belongs to the DsbB family.

Its subcellular location is the cell inner membrane. Functionally, required for disulfide bond formation in some periplasmic proteins. Acts by oxidizing the DsbA protein. In Shewanella sp. (strain ANA-3), this protein is Disulfide bond formation protein B.